Consider the following 256-residue polypeptide: Thiazole synthase (256 aa).

The active-site Schiff-base intermediate with DXP is the lysine 96. Residues glycine 157, 184-185, and 206-207 each bind 1-deoxy-D-xylulose 5-phosphate; these read AG and NT.

Belongs to the ThiG family. Homotetramer. Forms heterodimers with either ThiH or ThiS.

It localises to the cytoplasm. The catalysed reaction is [ThiS sulfur-carrier protein]-C-terminal-Gly-aminoethanethioate + 2-iminoacetate + 1-deoxy-D-xylulose 5-phosphate = [ThiS sulfur-carrier protein]-C-terminal Gly-Gly + 2-[(2R,5Z)-2-carboxy-4-methylthiazol-5(2H)-ylidene]ethyl phosphate + 2 H2O + H(+). It participates in cofactor biosynthesis; thiamine diphosphate biosynthesis. In terms of biological role, catalyzes the rearrangement of 1-deoxy-D-xylulose 5-phosphate (DXP) to produce the thiazole phosphate moiety of thiamine. Sulfur is provided by the thiocarboxylate moiety of the carrier protein ThiS. In vitro, sulfur can be provided by H(2)S. The sequence is that of Thiazole synthase from Roseobacter denitrificans (strain ATCC 33942 / OCh 114) (Erythrobacter sp. (strain OCh 114)).